We begin with the raw amino-acid sequence, 251 residues long: Triosephosphate isomerase (251 aa).

9-11 lines the substrate pocket; it reads NWK. His-95 functions as the Electrophile in the catalytic mechanism. The active-site Proton acceptor is the Glu-167. Substrate contacts are provided by residues Gly-173, Ser-212, and 233–234; that span reads GG.

Belongs to the triosephosphate isomerase family. As to quaternary structure, homodimer.

It localises to the cytoplasm. The enzyme catalyses D-glyceraldehyde 3-phosphate = dihydroxyacetone phosphate. It participates in carbohydrate biosynthesis; gluconeogenesis. It functions in the pathway carbohydrate degradation; glycolysis; D-glyceraldehyde 3-phosphate from glycerone phosphate: step 1/1. In terms of biological role, involved in the gluconeogenesis. Catalyzes stereospecifically the conversion of dihydroxyacetone phosphate (DHAP) to D-glyceraldehyde-3-phosphate (G3P). This Pseudomonas syringae pv. syringae (strain B728a) protein is Triosephosphate isomerase.